A 295-amino-acid polypeptide reads, in one-letter code: Aspartate carbamoyltransferase catalytic subunit (295 aa).

Carbamoyl phosphate-binding residues include Arg-54 and Thr-55. Lys-82 contacts L-aspartate. Residues Arg-104, His-132, and Gln-135 each coordinate carbamoyl phosphate. L-aspartate-binding residues include Arg-165 and Arg-218. The carbamoyl phosphate site is built by Gly-257 and Pro-258.

Belongs to the aspartate/ornithine carbamoyltransferase superfamily. ATCase family. In terms of assembly, heterododecamer (2C3:3R2) of six catalytic PyrB chains organized as two trimers (C3), and six regulatory PyrI chains organized as three dimers (R2).

It catalyses the reaction carbamoyl phosphate + L-aspartate = N-carbamoyl-L-aspartate + phosphate + H(+). It functions in the pathway pyrimidine metabolism; UMP biosynthesis via de novo pathway; (S)-dihydroorotate from bicarbonate: step 2/3. Its function is as follows. Catalyzes the condensation of carbamoyl phosphate and aspartate to form carbamoyl aspartate and inorganic phosphate, the committed step in the de novo pyrimidine nucleotide biosynthesis pathway. This Wolbachia pipientis subsp. Culex pipiens (strain wPip) protein is Aspartate carbamoyltransferase catalytic subunit.